Consider the following 129-residue polypeptide: Small ribosomal subunit protein uS11 (129 aa).

The protein belongs to the universal ribosomal protein uS11 family. Part of the 30S ribosomal subunit. Interacts with proteins S7 and S18. Binds to IF-3.

Located on the platform of the 30S subunit, it bridges several disparate RNA helices of the 16S rRNA. Forms part of the Shine-Dalgarno cleft in the 70S ribosome. The sequence is that of Small ribosomal subunit protein uS11 from Psychromonas ingrahamii (strain DSM 17664 / CCUG 51855 / 37).